Consider the following 648-residue polypeptide: L-aspartate oxidase 2-b, chloroplastic (648 aa).

Residues 98–101 (SGIA), lysine 120, 127–134 (STNYAQGG), and aspartate 298 each bind FAD. Residue arginine 373 is the Proton donor/acceptor of the active site. Residues glutamate 458 and 474–475 (SL) contribute to the FAD site.

It belongs to the FAD-dependent oxidoreductase 2 family. NadB subfamily. It depends on FAD as a cofactor.

Its subcellular location is the plastid. The protein localises to the chloroplast. The catalysed reaction is L-aspartate + O2 = iminosuccinate + H2O2. It functions in the pathway alkaloid biosynthesis; nicotine biosynthesis. The protein operates within cofactor biosynthesis; NAD(+) biosynthesis; iminoaspartate from L-aspartate (oxidase route): step 1/1. Its function is as follows. Involved in the biosynthesis of pyridine alkaloid natural products, leading mainly to the production of anabasine, anatabine, nicotine and nornicotine, effective deterrents against herbivores with antiparasitic and pesticide properties (neurotoxins); nornicotine serves as the precursor in the synthesis of the carcinogen compound N'-nitrosonornicotine (NNN). Catalyzes the oxidation of L-aspartate to iminoaspartate. This chain is L-aspartate oxidase 2-b, chloroplastic, found in Nicotiana tabacum (Common tobacco).